A 1209-amino-acid chain; its full sequence is Phospholipid-transporting ATPase ID (1209 aa).

The span at 1–12 shows a compositional bias: basic and acidic residues; it reads MTVPKEMPEKWA. The segment at 1-36 is disordered; it reads MTVPKEMPEKWARAQAPPSWSRKKPSWGTEEERRAR. Residues 1–64 lie on the Cytoplasmic side of the membrane; sequence MTVPKEMPEK…TSKYNILTFL (64 aa). A helical membrane pass occupies residues 65 to 86; that stretch reads PVNLFEQFQEVANTYFLFLLIL. Residues 87 to 92 are Exoplasmic loop-facing; the sequence is QLIPQI. Residues 93–112 traverse the membrane as a helical segment; that stretch reads SSLSWFTTIVPLVLVLTITA. The Cytoplasmic portion of the chain corresponds to 113–295; that stretch reads VKDATDDYFR…TSIDRLMNTL (183 aa). The chain crosses the membrane as a helical span at residues 296–317; sequence VLWIFGFLVCMGVILAIGNAIW. Topologically, residues 318–346 are exoplasmic loop; it reads EHEVGMRFQVYLPWDEAVDSAFFSGFLSF. Residues 347-368 traverse the membrane as a helical segment; the sequence is WSYIIILNTVVPISLYVSVEVI. The Cytoplasmic portion of the chain corresponds to 369–889; sequence RLGHSYFINW…GRWSYLRMCK (521 aa). The active-site 4-aspartylphosphate intermediate is the Asp-411. ATP-binding residues include Asp-411, Lys-412, Thr-413, Glu-515, Phe-556, Lys-579, Arg-613, Thr-693, Gly-694, Asp-695, Arg-807, and Lys-813. Residue Asp-411 coordinates Mg(2+). Thr-413 is a binding site for Mg(2+). Asp-833 contacts Mg(2+). ATP contacts are provided by Asn-836 and Asp-837. Asp-837 lines the Mg(2+) pocket. Residues 890–910 traverse the membrane as a helical segment; it reads FLCYFFYKNFAFTMVHFWFGF. Over 911-922 the chain is Exoplasmic loop; it reads FCGFSAQTVYDQ. The chain crosses the membrane as a helical span at residues 923 to 942; it reads YFITLYNIVYTSLPVLAMGV. The Cytoplasmic segment spans residues 943–972; the sequence is FDQDVPEQRSMEYPKLYEPGQLNLLFNKRE. The chain crosses the membrane as a helical span at residues 973–994; the sequence is FFICIAQGIYTSVLMFFIPYGV. Over 995–1008 the chain is Exoplasmic loop; the sequence is FADATRDDGTQLAD. Residues 1009-1031 form a helical membrane-spanning segment; sequence YQSFAVTVATSLVIVVSVQIGLD. Residues 1032 to 1037 lie on the Cytoplasmic side of the membrane; that stretch reads TGYWTA. Residues 1038–1058 traverse the membrane as a helical segment; that stretch reads INHFFIWGSLAVYFAILFAMH. The Exoplasmic loop segment spans residues 1059–1078; sequence SNGLFDMFPNQFRFVGNAQN. A helical membrane pass occupies residues 1079–1103; the sequence is TLAQPTVWLTIVLTTVVCIMPVVAF. Residues 1104–1209 are Cytoplasmic-facing; sequence RFLRLNLKPD…SGGADKPLKG (106 aa). Ser-1175 is subject to Phosphoserine. The disordered stretch occupies residues 1181 to 1209; the sequence is SSSWIESLRRKKSDSASSPSGGADKPLKG. Positions 1195-1209 are enriched in low complexity; it reads SASSPSGGADKPLKG.

This sequence belongs to the cation transport ATPase (P-type) (TC 3.A.3) family. Type IV subfamily. As to quaternary structure, component of a P4-ATPase flippase complex which consists of a catalytic alpha subunit ATP8B2 and an accessory beta subunit TMEM30A or TMEM30B. Mg(2+) serves as cofactor. As to expression, isoform 3 is ubiquitous, with highest expression in aorta, cerebellum and uterus.

Its subcellular location is the cell membrane. The protein localises to the endoplasmic reticulum membrane. The enzyme catalyses ATP + H2O + phospholipidSide 1 = ADP + phosphate + phospholipidSide 2.. It catalyses the reaction a 1,2-diacyl-sn-glycero-3-phosphocholine(out) + ATP + H2O = a 1,2-diacyl-sn-glycero-3-phosphocholine(in) + ADP + phosphate + H(+). Catalytic component of P4-ATPase flippase complex, which catalyzes the hydrolysis of ATP coupled to the transport of phosphatidylcholine (PC) from the outer to the inner leaflet of the plasma membrane. May contribute to the maintenance of membrane lipid asymmetry. The protein is Phospholipid-transporting ATPase ID of Homo sapiens (Human).